Consider the following 431-residue polypeptide: Putative helicase 055L (431 aa).

The 150-residue stretch at 73-222 (WGHVTSKGYC…ALGAFFGRED (150 aa)) folds into the Helicase ATP-binding domain. 86–93 (CPPGFGKT) is a binding site for ATP. Residues 175–178 (DEAH) carry the DEAH box motif. The tract at residues 403 to 431 (KCDASRPSQSTPTPTGSSQPAPRTRRPQR) is disordered. Residues 407-424 (SRPSQSTPTPTGSSQPAP) are compositionally biased toward low complexity.

This is Putative helicase 055L from Frog virus 3 (isolate Goorha) (FV-3).